A 382-amino-acid polypeptide reads, in one-letter code: Galactokinase (382 aa).

Glu-34–Asp-37 provides a ligand contact to substrate. Residue Gly-124–Ser-130 participates in ATP binding. Positions 130 and 162 each coordinate Mg(2+). The active-site Proton acceptor is Asp-174. A substrate-binding site is contributed by Tyr-223.

This sequence belongs to the GHMP kinase family. GalK subfamily.

Its subcellular location is the cytoplasm. It catalyses the reaction alpha-D-galactose + ATP = alpha-D-galactose 1-phosphate + ADP + H(+). The protein operates within carbohydrate metabolism; galactose metabolism. Catalyzes the transfer of the gamma-phosphate of ATP to D-galactose to form alpha-D-galactose-1-phosphate (Gal-1-P). This is Galactokinase from Escherichia coli O81 (strain ED1a).